The sequence spans 180 residues: Putative 5'(3')-deoxyribonucleotidase (180 aa).

Asp9 (nucleophile) is an active-site residue. Residues Asp9, Asp11, and Asp135 each contribute to the Mg(2+) site. Catalysis depends on Asp11, which acts as the Proton donor.

It belongs to the 5'(3')-deoxyribonucleotidase family. The cofactor is Mg(2+).

In terms of biological role, dephosphorylates the 5' and 2'(3')-phosphates of deoxyribonucleotides. The sequence is that of Putative 5'(3')-deoxyribonucleotidase from Staphylococcus aureus (strain Mu50 / ATCC 700699).